Here is a 367-residue protein sequence, read N- to C-terminus: Alanine racemase (367 aa).

The active-site Proton acceptor; specific for D-alanine is Lys40. Residue Lys40 is modified to N6-(pyridoxal phosphate)lysine. A substrate-binding site is contributed by Arg136. The active-site Proton acceptor; specific for L-alanine is the Tyr263. Residue Met310 participates in substrate binding.

It belongs to the alanine racemase family. Pyridoxal 5'-phosphate is required as a cofactor.

The catalysed reaction is L-alanine = D-alanine. Its pathway is amino-acid biosynthesis; D-alanine biosynthesis; D-alanine from L-alanine: step 1/1. Catalyzes the interconversion of L-alanine and D-alanine. May also act on other amino acids. In Streptococcus pneumoniae (strain 70585), this protein is Alanine racemase (alr).